The chain runs to 123 residues: Probable prefoldin subunit 4 (123 aa).

Belongs to the prefoldin subunit beta family. Heterohexamer of two PFD-alpha type and four PFD-beta type subunits.

Functionally, binds specifically to cytosolic chaperonin (c-CPN) and transfers target proteins to it. Binds to nascent polypeptide chain and promotes folding in an environment in which there are many competing pathways for nonnative proteins. The polypeptide is Probable prefoldin subunit 4 (Schizosaccharomyces pombe (strain 972 / ATCC 24843) (Fission yeast)).